We begin with the raw amino-acid sequence, 462 residues long: NADH-quinone oxidoreductase subunit N 1 (462 aa).

15 helical membrane-spanning segments follow: residues 4–24 (FVVAYFPHLCLAFGGLLVLCL), 32–52 (AGFYPATAALFAALPGLWAVA), 60–80 (IACFYAGLLSVIALATIALLA), 88–108 (FAGDALYGLLLWSALGMLLLA), 113–133 (WIMLAVGLELASLCLYALIAA), 148–168 (FLPGAMALAVLLFGMALIYAA), 178–198 (LAAPGPLTAAGLALVLVGVGF), 220–240 (VAAFLSSGSKAAAAAALLHVC), 251–271 (LWPALAVGAGLTMAVGNLGAV), 279–299 (LLAYSSIAQMGYILMAAMAVN), 307–327 (LFYLAAFALMDLAAFGAVGAL), 351–371 (AGVLAIGLASLAGLPPTAGFV), 374–394 (FLVFGAALSAGYVGLAAFGII), 416–436 (LIAHPAAVYAAGPAGTLALGV), and 439–459 (AGLVGLGLFPQTLLGAIAALF).

The protein belongs to the complex I subunit 2 family. NDH-1 is composed of 14 different subunits. Subunits NuoA, H, J, K, L, M, N constitute the membrane sector of the complex.

The protein resides in the cell inner membrane. It catalyses the reaction a quinone + NADH + 5 H(+)(in) = a quinol + NAD(+) + 4 H(+)(out). Functionally, NDH-1 shuttles electrons from NADH, via FMN and iron-sulfur (Fe-S) centers, to quinones in the respiratory chain. The immediate electron acceptor for the enzyme in this species is believed to be ubiquinone. Couples the redox reaction to proton translocation (for every two electrons transferred, four hydrogen ions are translocated across the cytoplasmic membrane), and thus conserves the redox energy in a proton gradient. This chain is NADH-quinone oxidoreductase subunit N 1, found in Solidesulfovibrio magneticus (strain ATCC 700980 / DSM 13731 / RS-1) (Desulfovibrio magneticus).